Consider the following 505-residue polypeptide: MDSQVEGKISPSQKESSSTSGLVSPSEDGPAHQKIHRDQLSVDQIKKIREERAQKRQVRRNSLISQGKDPDFPTPDLQFIERPFLPINHDNSKGLTPATIQVTQDSLDVKIMTYNTLAQTLIRRDFFPESGPALKWHKRSKVLVHELKKYRPDVVSLQEVDYNELNFWQENFHKLGFDVIFKRHEGKTHGLLVAWNNKKFQLDNDWMLDYDNILAGNVISARTRTKNIALIISLYFKGITDSSSRGIIVANTHLFWHPFGVFERLRQSYLVLQKIQEIKACSKYNGWHSLLMGDFNTEPEEPPYLAITKRPLILKGPIRAMVECSLAYRYSKKRNGEESDQDDEECDEKSRGEGHSDQPQNPKPESFTATKEEKALVNQLVALHNSLHVKGVSLYGIGYGKVHPENANGSHGEPGLSNWANTWCGLLDYIFYIEGDHNQDTRQKEPLNAFEGNNNVKIIGYLRMPCAQEMPKHSQPFEGEYASDHISLMCQIRLFFGGEKVHSLK.

Disordered regions lie at residues 1-75 and 334-369; these read MDSQ…FPTP and RNGE…SFTA. Over residues 10–23 the composition is skewed to polar residues; sequence SPSQKESSSTSGLV. Basic and acidic residues predominate over residues 36-54; sequence HRDQLSVDQIKKIREERAQ. Ser62 bears the Phosphoserine mark. The segment covering 338-347 has biased composition (acidic residues); it reads ESDQDDEECD.

This sequence belongs to the CCR4/nocturin family.

This is Probable RNA exonuclease NGL3 (NGL3) from Saccharomyces cerevisiae (strain ATCC 204508 / S288c) (Baker's yeast).